The following is a 157-amino-acid chain: 2-C-methyl-D-erythritol 2,4-cyclodiphosphate synthase (157 aa).

Residues Asp-8 and His-10 each coordinate a divalent metal cation. 4-CDP-2-C-methyl-D-erythritol 2-phosphate-binding positions include 8 to 10 and 34 to 35; these read DVH and HS. His-42 is an a divalent metal cation binding site. Residues 56 to 58, 61 to 65, 100 to 106, 132 to 135, Phe-139, and Arg-142 contribute to the 4-CDP-2-C-methyl-D-erythritol 2-phosphate site; these read DIG, FPDTD, AQAPKMA, and TTTE.

The protein belongs to the IspF family. As to quaternary structure, homotrimer. A divalent metal cation serves as cofactor.

The catalysed reaction is 4-CDP-2-C-methyl-D-erythritol 2-phosphate = 2-C-methyl-D-erythritol 2,4-cyclic diphosphate + CMP. It participates in isoprenoid biosynthesis; isopentenyl diphosphate biosynthesis via DXP pathway; isopentenyl diphosphate from 1-deoxy-D-xylulose 5-phosphate: step 4/6. Functionally, involved in the biosynthesis of isopentenyl diphosphate (IPP) and dimethylallyl diphosphate (DMAPP), two major building blocks of isoprenoid compounds. Catalyzes the conversion of 4-diphosphocytidyl-2-C-methyl-D-erythritol 2-phosphate (CDP-ME2P) to 2-C-methyl-D-erythritol 2,4-cyclodiphosphate (ME-CPP) with a corresponding release of cytidine 5-monophosphate (CMP). This Pseudomonas aeruginosa (strain UCBPP-PA14) protein is 2-C-methyl-D-erythritol 2,4-cyclodiphosphate synthase.